The chain runs to 457 residues: ATP synthase subunit beta (457 aa).

147-154 provides a ligand contact to ATP; the sequence is GGAGVGKT.

The protein belongs to the ATPase alpha/beta chains family. F-type ATPases have 2 components, CF(1) - the catalytic core - and CF(0) - the membrane proton channel. CF(1) has five subunits: alpha(3), beta(3), gamma(1), delta(1), epsilon(1). CF(0) has three main subunits: a(1), b(2) and c(9-12). The alpha and beta chains form an alternating ring which encloses part of the gamma chain. CF(1) is attached to CF(0) by a central stalk formed by the gamma and epsilon chains, while a peripheral stalk is formed by the delta and b chains.

The protein localises to the cell inner membrane. It catalyses the reaction ATP + H2O + 4 H(+)(in) = ADP + phosphate + 5 H(+)(out). Its function is as follows. Produces ATP from ADP in the presence of a proton gradient across the membrane. The catalytic sites are hosted primarily by the beta subunits. In Actinobacillus pleuropneumoniae serotype 5b (strain L20), this protein is ATP synthase subunit beta.